Here is a 212-residue protein sequence, read N- to C-terminus: Ropporin-1 (212 aa).

The region spanning 12–43 (PELPELLKQFTKAAIRSQPQDLIQWAAEYFGA) is the RIIa domain. At Ser56 the chain carries Phosphoserine. The interval 209-212 (VRLE) is interaction with RHPN1.

It belongs to the ropporin family. In terms of assembly, homodimer. Interacts with AKAP3. May interact with SPA17. Interacts with RHPN1. Interacts with FSCB; the interaction increases upon spermatozoa capacitation conditions. Interacts with CFAP61. In terms of processing, sumoylated, sumoylation decreases upon spermatozoa capacitation conditions.

It is found in the cell projection. The protein localises to the cilium. Its subcellular location is the flagellum. Functionally, important for male fertility. With ROPN1L, involved in fibrous sheath integrity and sperm motility, plays a role in PKA-dependent signaling processes required for spermatozoa capacitation. The polypeptide is Ropporin-1 (ROPN1) (Bos taurus (Bovine)).